Reading from the N-terminus, the 225-residue chain is Insulin-induced gene 2 protein (225 aa).

Residues 1-28 (MAEGETESPRPKKRGPYISSVTSQSVNV) lie on the Cytoplasmic side of the membrane. A helical membrane pass occupies residues 29–51 (VIRGVVLFFIGVFLALVLNLLQI). Residues 52–70 (QRNVTLFPPDVITSIFSSA) lie on the Lumenal side of the membrane. Residues 71–88 (WWVPPCCGTASAVIGLLY) form a helical membrane-spanning segment. The Cytoplasmic portion of the chain corresponds to 89 to 103 (PCIDRHLGEPHKFKR). The chain crosses the membrane as a helical span at residues 104–126 (EWSSVMRCVAVFVGINHASAKVD). Residues 127-129 (FDN) lie on the Lumenal side of the membrane. The chain crosses the membrane as a helical span at residues 130–148 (NFQFSLTLAALSVGLWWTF). Over 149–153 (DRSRS) the chain is Cytoplasmic. At S151 the chain carries Phosphoserine. Residues 154 to 175 (GFGLGVGIAFLATVVTQLLVYN) traverse the membrane as a helical segment. The Lumenal portion of the chain corresponds to 176 to 189 (GVYQYTSPDFLYVR). A helical transmembrane segment spans residues 190–207 (SWLPCIFFAGGITMGNIG). The Cytoplasmic segment spans residues 208–225 (RQLAMYECKVIAEKSHQE). At C215 the chain carries Cysteine sulfenic acid (-SOH); alternate. A Glycyl cysteine thioester (Cys-Gly) (interchain with G-Cter in ubiquitin); alternate cross-link involves residue C215. Positions 219-225 (AEKSHQE) match the KxHxx motif.

It belongs to the INSIG family. Interacts with SCAP; interaction is direct and only takes place in the presence of sterols; it prevents interaction between SCAP and the coat protein complex II (COPII). Associates with the SCAP-SREBP complex (composed of SCAP and SREBF1/SREBP1 or SREBF2/SREBP2); association is mediated via its interaction with SCAP and only takes place in the presence of sterols. Interacts with RNF139. Interacts with RNF145. Post-translationally, phosphorylation at Ser-151 by PCK1 reduces binding to oxysterol, disrupting the interaction between INSIG2 and SCAP, thereby promoting nuclear translocation of SREBP proteins (SREBF1/SREBP1 or SREBF2/SREBP2) and subsequent transcription of downstream lipogenesis-related genes. Polyubiquitinated by AMFR/gp78 at Cys-215 in some tissues such as adipose tissues, undifferentiated myoblasts and liver, leading to its degradation. In differentiated myotubes, Cys-215 oxidation prevents ubiquitination at the same site, resulting in protein stabilization. In terms of processing, oxidized at Cys-215 in differentiated myotubes, preventing ubiquitination at the same site, and resulting in protein stabilization.

It localises to the endoplasmic reticulum membrane. Oxysterol-binding protein that mediates feedback control of cholesterol synthesis by controlling both endoplasmic reticulum to Golgi transport of SCAP and degradation of HMGCR. Acts as a negative regulator of cholesterol biosynthesis by mediating the retention of the SCAP-SREBP complex in the endoplasmic reticulum, thereby blocking the processing of sterol regulatory element-binding proteins (SREBPs) SREBF1/SREBP1 and SREBF2/SREBP2. Binds oxysterol, including 22-hydroxycholesterol, 24-hydroxycholesterol, 25-hydroxycholesterol and 27-hydroxycholesterol, regulating interaction with SCAP and retention of the SCAP-SREBP complex in the endoplasmic reticulum. In presence of oxysterol, interacts with SCAP, retaining the SCAP-SREBP complex in the endoplasmic reticulum, thereby preventing SCAP from escorting SREBF1/SREBP1 and SREBF2/SREBP2 to the Golgi. Sterol deprivation or phosphorylation by PCK1 reduce oxysterol-binding, disrupting the interaction between INSIG2 and SCAP, thereby promoting Golgi transport of the SCAP-SREBP complex, followed by processing and nuclear translocation of SREBF1/SREBP1 and SREBF2/SREBP2. Also regulates cholesterol synthesis by regulating degradation of HMGCR: initiates the sterol-mediated ubiquitin-mediated endoplasmic reticulum-associated degradation (ERAD) of HMGCR via recruitment of the reductase to the ubiquitin ligase RNF139. This is Insulin-induced gene 2 protein from Rattus norvegicus (Rat).